The sequence spans 574 residues: High-affinity methionine permease (574 aa).

The Cytoplasmic portion of the chain corresponds to 1 to 61 (MSEGRTFLSQ…TELDQGEKQL (61 aa)). A Glycyl lysine isopeptide (Lys-Gly) (interchain with G-Cter in ubiquitin) cross-link involves residue lysine 28. The helical transmembrane segment at 62 to 82 (GILSCIGLICNRMLGTGVFAV) threads the bilayer. At 83 to 92 (SSTIYTLCGS) the chain is on the extracellular side. The chain crosses the membrane as a helical span at residues 93–113 (VGLALIMWAVGAIIAISGLYV). Over 114-140 (YMEFGTAIPKNGGEKNYLEAIFRKPKF) the chain is Cytoplasmic. The chain crosses the membrane as a helical span at residues 141–161 (FITCMYAAYIFFLGWAAGNSI). At 162 to 182 (NTAIMFLTAADTEVTKWNQRG) the chain is on the extracellular side. The helical transmembrane segment at 183 to 203 (IGVAVVFFAFLINSLNVKIGL) threads the bilayer. Residues 204 to 207 (YLQN) are Cytoplasmic-facing. A helical membrane pass occupies residues 208-228 (ILGIFKIGIVLFISITGWVAL). Residues 229–293 (GGGLKDGYQS…VRTLKIAGPT (65 aa)) lie on the Extracellular side of the membrane. Residues 294 to 314 (SMVFLAIIYIFVNIAYFAVVP) form a helical membrane-spanning segment. Over 315-340 (KDKLISSKLILAADFFDIVFGGQAKR) the chain is Cytoplasmic. The chain crosses the membrane as a helical span at residues 341-361 (AAAALVGLSALGNVLSVIFSQ). Over 362–418 (GRIIQQLGREGVLPFSNFFASSKPFNSPMVGLFQHFIVCTVTILAPPPGDAYLLVQN) the chain is Extracellular. The chain crosses the membrane as a helical span at residues 419–439 (LISYPMNIINFAISAGLLWIY). Over 440–455 (WQRRQGKIEWNPPIKA) the chain is Cytoplasmic. Residues 456-476 (GVFVTGFFTLSNLYLIIAPYV) form a helical membrane-spanning segment. Residues 477-490 (PPSNGESVYSSMPY) lie on the Extracellular side of the membrane. Residues 491-511 (WIHCVIAWGIFFFGGVYYVVW) form a helical membrane-spanning segment. Residues 512–574 (AQLLPRWGHY…HYKSEQEKSL (63 aa)) lie on the Cytoplasmic side of the membrane. Threonine 552 bears the Phosphothreonine mark. Phosphoserine is present on serine 573.

To yeast low affinity methionine permease (MUP3).

The protein localises to the membrane. Its function is as follows. High affinity permease for methionine. The chain is High-affinity methionine permease (MUP1) from Saccharomyces cerevisiae (strain ATCC 204508 / S288c) (Baker's yeast).